A 463-amino-acid polypeptide reads, in one-letter code: ATP-dependent protease ATPase subunit HslU (463 aa).

ATP contacts are provided by residues Ile-19, 61–66 (GVGKTE), Asp-277, Glu-341, and Arg-413.

This sequence belongs to the ClpX chaperone family. HslU subfamily. As to quaternary structure, a double ring-shaped homohexamer of HslV is capped on each side by a ring-shaped HslU homohexamer. The assembly of the HslU/HslV complex is dependent on binding of ATP.

The protein localises to the cytoplasm. Its function is as follows. ATPase subunit of a proteasome-like degradation complex; this subunit has chaperone activity. The binding of ATP and its subsequent hydrolysis by HslU are essential for unfolding of protein substrates subsequently hydrolyzed by HslV. HslU recognizes the N-terminal part of its protein substrates and unfolds these before they are guided to HslV for hydrolysis. This chain is ATP-dependent protease ATPase subunit HslU, found in Bacillus cereus (strain B4264).